A 1066-amino-acid chain; its full sequence is Vinculin (1066 aa).

The N-terminal globular head stretch occupies residues 1 to 835 (MPVFHTRTIE…GAVAKVREAF (835 aa)). A Phosphoserine modification is found at serine 97. A talin-interaction region spans residues 168 to 208 (MTKMAKMIDERQQELTHQEHRVMLVNSMNTVKELLPVLISA). At lysine 173 the chain carries N6-acetyllysine. 3 repeat units span residues 259–369 (ASKD…KVEN), 370–479 (AARK…KTNR), and 480–589 (AVAN…QMQE). The interval 259 to 589 (ASKDTEAMKR…LKDLKTQMQE (331 aa)) is 3 X 112 AA tandem repeats. Serine 260, serine 272, serine 275, serine 290, serine 346, and serine 434 each carry phosphoserine. Lysine 496 is modified (N6-acetyllysine). Tyrosine 537 is modified (phosphotyrosine). Serine 574, serine 579, and serine 600 each carry phosphoserine. Phosphothreonine occurs at positions 604 and 672. At serine 721 the chain carries Phosphoserine. The interval 741-764 (MANIQPQMLVAGATSIARRANRIL) is interaction with ACTN4. 2 positions are modified to phosphoserine: serine 795 and serine 809. Tyrosine 822 is modified (phosphotyrosine). The linker (Pro-rich) stretch occupies residues 836 to 878 (QPQEPDFPPPPPDLEQLRLTDELAPPKPPLPEGEVPPPRPPPP). The tract at residues 857-887 (ELAPPKPPLPEGEVPPPRPPPPEEKDEEFPE) is disordered. Over residues 860 to 876 (PPKPPLPEGEVPPPRPP) the composition is skewed to pro residues. The interval 879–1066 (EEKDEEFPEQ…RWVRKTPWYQ (188 aa)) is C-terminal tail. 2 facilitates phospholipid membrane insertion regions span residues 935 to 978 (RLVR…KRIR) and 1052 to 1066 (AGFT…PWYQ). The residue at position 1065 (tyrosine 1065) is a Phosphotyrosine; by SRC-type Tyr-kinases.

This sequence belongs to the vinculin/alpha-catenin family. In terms of assembly, exhibits self-association properties. Part of a complex composed of THSD1, PTK2/FAK1, TLN1 and VCL. Interacts with APBB1IP, NRAP and TLN1. Interacts with CTNNB1 and this interaction is necessary for its localization to the cell-cell junctions and for its function in regulating cell surface expression of E-cadherin. Interacts with SORBS1. Interacts with SYNM. Interacts with CTNNA1. Binds to ACTN4; this interaction triggers conformational changes. Interacts with FLII. In terms of processing, phosphorylated; on serines, threonines and tyrosines. Phosphorylation on Tyr-1065 in activated platelets affects head-tail interactions and cell spreading but has no effect on actin binding nor on localization to focal adhesion plaques. Acetylated; mainly by myristic acid but also by a small amount of palmitic acid.

It localises to the cell membrane. The protein resides in the cell junction. It is found in the adherens junction. Its subcellular location is the focal adhesion. The protein localises to the cytoplasm. It localises to the cytoskeleton. The protein resides in the sarcolemma. It is found in the cell projection. Its subcellular location is the podosome. Its function is as follows. Actin filament (F-actin)-binding protein involved in cell-matrix adhesion and cell-cell adhesion. Regulates cell-surface E-cadherin expression and potentiates mechanosensing by the E-cadherin complex. May also play important roles in cell morphology and locomotion. The polypeptide is Vinculin (Rattus norvegicus (Rat)).